Here is a 398-residue protein sequence, read N- to C-terminus: DnaJ-like protein R260 (398 aa).

The J domain maps to 7–72; the sequence is DLYEILGLTP…EKRRVYDQYG (66 aa). The CR-type zinc-finger motif lies at 118 to 202; the sequence is KKTVKVTITV…CKGAGINKSE (85 aa). 4 CXXCXGXG motif repeats span residues 131 to 138, 147 to 154, 173 to 180, and 190 to 197; these read CDDCDATG, CKVCRGKG, CHGCQGKK, and CPSCKGAG. The interval 364–398 is disordered; that stretch reads LRQINTDPSDESQDRDSEESYGGHGRPEGVGCAQQ. Positions 371 to 382 are enriched in acidic residues; sequence PSDESQDRDSEE.

It depends on Zn(2+) as a cofactor.

The polypeptide is DnaJ-like protein R260 (Acanthamoeba polyphaga mimivirus (APMV)).